We begin with the raw amino-acid sequence, 382 residues long: Guanylate kinase 1 (382 aa).

In terms of domain architecture, Guanylate kinase-like spans 128-310 (QKPIVISGPS…CYENLKKLLS (183 aa)). 135-142 (GPSGVGKG) provides a ligand contact to ATP. Catalysis depends on residues arginine 168, arginine 261, and arginine 272. ATP contacts are provided by asparagine 295 and aspartate 296.

This sequence belongs to the guanylate kinase family. In terms of assembly, monomer.

Its subcellular location is the cytoplasm. It is found in the nucleus. It catalyses the reaction GMP + ATP = GDP + ADP. In terms of biological role, essential for recycling GMP and indirectly, cGMP. In Oryza sativa subsp. japonica (Rice), this protein is Guanylate kinase 1 (GK1).